The primary structure comprises 221 residues: Transcription factor bHLH148 (221 aa).

Disordered regions lie at residues 1 to 45 (MASL…GEIH) and 70 to 89 (LNSS…GKAV). 2 stretches are compositionally biased toward low complexity: residues 26 to 41 (SASS…SSVS) and 72 to 82 (SSASTSSSPTA). Positions 148–197 (KRRVSVLRLNKKSIPDVNRKVRVLGRLVPGCGKQSVPVILEEATDYIQAL) constitute a bHLH domain.

Homodimer. Interacts with PRE3. Binds to RSA1.

The protein localises to the nucleus. Functionally, bHLH transcription factor that binds DNA on specific sequence 5'-CANNTG-3' in target gene promoters. Negatively regulates brassinosteroid signaling. Together with BHLH148/RITF1, regulates the transcription of several genes involved in the detoxification of reactive oxygen species (ROS) generated by salt (NaCl) stress. Confers tolerance to salt and to the oxidative stress-inducing reagents hydrogen peroxide H(2)O(2) and methyl viologen (MV). This chain is Transcription factor bHLH148, found in Arabidopsis thaliana (Mouse-ear cress).